A 149-amino-acid polypeptide reads, in one-letter code: MADQLTDDQIAEFKEAFSLFDKDGDGCITTKELGTVMRSLGQNPTEAELQDMINEVDADGNGTIDFPEFLNLMARKMKDTDSEEELKEAFRVFDKDQNGFISAAELRHVMTNLGEKLTDEEVDEMIREADVDGDGQINYEEFVKVMMAK.

A2 is subject to N-acetylalanine. 4 EF-hand domains span residues 8-43 (DQIA…LGQN), 44-79 (PTEA…KMKD), 81-116 (DSEE…LGEK), and 117-149 (LTDE…MMAK). Ca(2+) is bound by residues D21, D23, D25, C27, E32, D57, D59, N61, T63, E68, D94, D96, N98, and E105. Position 116 is an N6,N6,N6-trimethyllysine (K116). Ca(2+) is bound by residues D130, D132, D134, Q136, and E141.

This sequence belongs to the calmodulin family.

Calmodulin mediates the control of a large number of enzymes, ion channels and other proteins by Ca(2+). Among the enzymes to be stimulated by the calmodulin-Ca(2+) complex are a number of protein kinases and phosphatases. This is Calmodulin-1 (CAM1-1) from Oryza sativa subsp. indica (Rice).